The chain runs to 635 residues: Threonine--tRNA ligase (635 aa).

The TGS domain maps to 1-62; it reads MITITLPDGS…EHDAILRIIT (62 aa). The segment at 244–535 is catalytic; sequence DHRKIGKAQD…LIEHYAGIWP (292 aa). Residues C335, H386, and H512 each contribute to the Zn(2+) site.

It belongs to the class-II aminoacyl-tRNA synthetase family. In terms of assembly, homodimer. Zn(2+) serves as cofactor.

It is found in the cytoplasm. It carries out the reaction tRNA(Thr) + L-threonine + ATP = L-threonyl-tRNA(Thr) + AMP + diphosphate + H(+). In terms of biological role, catalyzes the attachment of threonine to tRNA(Thr) in a two-step reaction: L-threonine is first activated by ATP to form Thr-AMP and then transferred to the acceptor end of tRNA(Thr). Also edits incorrectly charged L-seryl-tRNA(Thr). The sequence is that of Threonine--tRNA ligase from Xylella fastidiosa (strain M23).